The following is a 267-amino-acid chain: Transcription factor LBX1 (267 aa).

Basic and acidic residues predominate over residues 1-21 (MTSKDEAKSSASSVEERRRNA). The tract at residues 1 to 36 (MTSKDEAKSSASSVEERRRNALDLLPPPANSNKPLT) is disordered. The homeobox DNA-binding region spans 127-186 (RRKSRTAFTNHQIYELEKRFLYQKYLSPADRDQIAQQLGLTNAQVITWFQNRRAKLKRDL). The tract at residues 211–267 (SELEESGSERGNSRSRSPQLGLTSNHMPLSPSXPLTDQHASKECSEDEEDVEIDVDD) is disordered. The span at 228 to 237 (PQLGLTSNHM) shows a compositional bias: polar residues. Residues 255–267 (SEDEEDVEIDVDD) show a composition bias toward acidic residues.

Expressed in all myoblasts that will populate body wall muscles as well as in a group of cells the migrate into the head.

It localises to the nucleus. Transcription factor that controls hypaxial muscle development by down-regulating myod1 and cdkn1b/p27, thereby allowing myoblasts to proliferate before the onset of terminal differentiation. The sequence is that of Transcription factor LBX1 from Xenopus laevis (African clawed frog).